The following is a 207-amino-acid chain: 3,4-dihydroxy-2-butanone 4-phosphate synthase (207 aa).

Residues 28–29, Asp33, 140–144, and Glu164 each bind D-ribulose 5-phosphate; these read RE and RRGHT. Glu29 serves as a coordination point for Mg(2+). His143 lines the Mg(2+) pocket.

Belongs to the DHBP synthase family. Homodimer. Requires Mg(2+) as cofactor. Mn(2+) serves as cofactor.

It catalyses the reaction D-ribulose 5-phosphate = (2S)-2-hydroxy-3-oxobutyl phosphate + formate + H(+). It functions in the pathway cofactor biosynthesis; riboflavin biosynthesis; 2-hydroxy-3-oxobutyl phosphate from D-ribulose 5-phosphate: step 1/1. In terms of biological role, catalyzes the conversion of D-ribulose 5-phosphate to formate and 3,4-dihydroxy-2-butanone 4-phosphate. The sequence is that of 3,4-dihydroxy-2-butanone 4-phosphate synthase from Oceanobacillus iheyensis (strain DSM 14371 / CIP 107618 / JCM 11309 / KCTC 3954 / HTE831).